The sequence spans 132 residues: Small ribosomal subunit protein uS8c (132 aa).

This sequence belongs to the universal ribosomal protein uS8 family. Part of the 30S ribosomal subunit.

Its subcellular location is the plastid. The protein resides in the cyanelle. Its function is as follows. One of the primary rRNA binding proteins, it binds directly to 16S rRNA central domain where it helps coordinate assembly of the platform of the 30S subunit. This is Small ribosomal subunit protein uS8c (rps8) from Cyanophora paradoxa.